A 90-amino-acid polypeptide reads, in one-letter code: Mu-theraphotoxin-Phlo1b (90 aa).

The first 22 residues, Met-1–Ala-22, serve as a signal peptide directing secretion. The propeptide occupies Glu-23–Arg-50. 3 cysteine pairs are disulfide-bonded: Cys-52/Cys-66, Cys-59/Cys-71, and Cys-65/Cys-79. Phe-85 carries the phenylalanine amide modification. The propeptide occupies Gly-86–Ser-90.

The protein belongs to the neurotoxin 10 (Hwtx-1) family. 39 (Jztx-34) subfamily. As to expression, expressed by the venom gland.

The protein localises to the secreted. Its function is as follows. Gating-modifier toxin that inhibits voltage-gated sodium channel Nav by shifting the threshold for channel activation to more positive potentials. This toxin moderately inhibits human Nav1.7/SCN9A (IC(50)=360 nM) and weakly inhibits hNav1.2/SCN2A (37% inhibition at 1 uM peptide) and hNav1.5/SCN5A (&lt;20% inhibition at 1 uM peptide). Inhibition of Nav1.7 is voltage-dependent, with lower inhibition at more positive test pulses. The chain is Mu-theraphotoxin-Phlo1b from Phlogius sp. (Tarantula spider).